Here is a 527-residue protein sequence, read N- to C-terminus: Dual specificity protein kinase shkA (527 aa).

The 260-residue stretch at 45–304 folds into the Protein kinase domain; it reads ITTESILGDG…GIVSELEEII (260 aa). ATP is bound by residues 51-59 and lysine 72; that span reads LGDGSFGTV. Aspartate 167 (proton acceptor) is an active-site residue. Residues 424-513 enclose the SH2 domain; the sequence is WFHGDISTSE…INTPCLGSRF (90 aa).

This sequence belongs to the protein kinase superfamily. TKL Ser/Thr protein kinase family. SH2 domain-containing protein kinase subfamily.

Its subcellular location is the membrane. The catalysed reaction is L-seryl-[protein] + ATP = O-phospho-L-seryl-[protein] + ADP + H(+). It catalyses the reaction L-threonyl-[protein] + ATP = O-phospho-L-threonyl-[protein] + ADP + H(+). Required for proper chemotaxis and phagocytosis; proper spatiotemporal control of F-actin levels in chemotaxing cells. Negative regulator of the PI3K (phosphatidylinositol 3 kinase) pathway. Predominantly phosphorylates serines and threonines and tyrosines at a lower level. This is Dual specificity protein kinase shkA (shkA) from Dictyostelium discoideum (Social amoeba).